Here is a 298-residue protein sequence, read N- to C-terminus: Fe(II)/2-oxoglutarate-dependent dioxygenase nvfF (298 aa).

The Fe cation site is built by H137, D139, and H212.

It belongs to the PhyH family. In terms of assembly, homodimer. Fe cation is required as a cofactor.

It catalyses the reaction fumigatonoid C + 2-oxoglutarate + O2 = novofumigatonin + succinate + CO2 + H2O. It participates in secondary metabolite biosynthesis; terpenoid biosynthesis. In terms of biological role, fe(II)/2-oxoglutarate-dependent dioxygenase; part of the gene cluster that mediates the biosynthesis of novofumigatonin, a heavily oxygenated meroterpenoid containing a unique orthoester moiety. The first step of the pathway is the synthesis of 3,5-dimethylorsellinic acid (DMOA) by the polyketide synthase nvfA via condensation of one acetyl-CoA starter unit with 3 malonyl-CoA units and 2 methylations. DMOA is then converted to farnesyl-DMOA by the farnesyltransferase nvfB. Epoxydation by FAD-dependent monooxygenase nvfK, followed by a protonation-initiated cyclization catalyzed by the terpene cyclase nvfL leads to the production of asnavolin H. The short chain dehydrogenase nvfC then as a 3-OH dehydrogenase of asnovolin H to yield chemesin D. There are two branches to synthesize asnovolin A from chemesin D. In one branch, chemesin D undergoes Baeyer-Villiger oxidation by nvfH, methylation by nvfJ, and enoyl reduction by the nvfM D enoylreductase that reduces the double bond between C-5'and C-6', to form respectively asnovolin I, asnovolin K, and asnovolin A. In the other branch, the methylation precedes the Baeyer-Villiger oxidation and the enoyl reduction to yield asnovolin A via the asnovolin J intermediate. Asnovolin A is further converted to fumigatonoid A by the Fe(II)/2-oxoglutarate-dependent dioxygenase nvfI that catalyzes an endoperoxidation reaction. The alpha/beta hydrolase nvfD then acts as an epimerase that converts fumigatonoid A to its C-5' epimer, which then undergoes spontaneous or nvfD-catalyzed lactonization. The following step utilizes the ketoreductase nvfG to produce fumigatonoid B. The dioxygenase nvfE further converts fumigatonoid B into fumigatonoid C. Finally the Fe(II)/2-oxoglutarate-dependent dioxygenase nvfF catalyzes two rounds of oxidation to transform fumigatonoid C into the end product, novofumigatonin A. This Aspergillus novofumigatus (strain IBT 16806) protein is Fe(II)/2-oxoglutarate-dependent dioxygenase nvfF.